The following is a 358-amino-acid chain: Type II restriction enzyme CviJI (358 aa).

Requires Mg(2+) as cofactor.

The enzyme catalyses Endonucleolytic cleavage of DNA to give specific double-stranded fragments with terminal 5'-phosphates.. Its function is as follows. A P subtype restriction enzyme that recognizes the double-stranded sequence 5'-RGCY-3' and cleaves after G-2. In the presence of ATP, there is a relaxation of its specificity and it can cleave 5'-RGCN-3' and 5'-YGCY-3', but not 5'-YGCR-3' (R.CviJI* activity). In Paramecium bursaria Chlorella virus IL3A (PBCV-IL3A), this protein is Type II restriction enzyme CviJI.